The primary structure comprises 397 residues: Succinate--CoA ligase [ADP-forming] subunit beta (397 aa).

The ATP-grasp domain occupies 9–254; that stretch reads KALLKSFGAP…KSEEDEKEIQ (246 aa). ATP contacts are provided by residues Lys46, 53-55, Glu109, Ala112, and Glu117; that span reads GRG. Mg(2+) is bound by residues Asn209 and Asp223. Substrate is bound by residues Asn274 and 331 to 333; that span reads GIM.

Belongs to the succinate/malate CoA ligase beta subunit family. In terms of assembly, heterotetramer of two alpha and two beta subunits. It depends on Mg(2+) as a cofactor.

It carries out the reaction succinate + ATP + CoA = succinyl-CoA + ADP + phosphate. It catalyses the reaction GTP + succinate + CoA = succinyl-CoA + GDP + phosphate. Its pathway is carbohydrate metabolism; tricarboxylic acid cycle; succinate from succinyl-CoA (ligase route): step 1/1. Its function is as follows. Succinyl-CoA synthetase functions in the citric acid cycle (TCA), coupling the hydrolysis of succinyl-CoA to the synthesis of either ATP or GTP and thus represents the only step of substrate-level phosphorylation in the TCA. The beta subunit provides nucleotide specificity of the enzyme and binds the substrate succinate, while the binding sites for coenzyme A and phosphate are found in the alpha subunit. This chain is Succinate--CoA ligase [ADP-forming] subunit beta, found in Rhizobium rhizogenes (strain K84 / ATCC BAA-868) (Agrobacterium radiobacter).